The primary structure comprises 352 residues: Holliday junction branch migration complex subunit RuvB (352 aa).

The interval 1-42 is disordered; that stretch reads MAIVSSSAGRADSQPPAAKSRVVDASPLPEEASPAREDGLRP. Residues 13–201 form a large ATPase domain (RuvB-L) region; the sequence is SQPPAAKSRV…FGLIQRLEFY (189 aa). Residues 33–42 are compositionally biased toward basic and acidic residues; sequence SPAREDGLRP. Positions 40, 41, 82, 85, 86, 87, 191, 201, and 238 each coordinate ATP. Thr86 is a Mg(2+) binding site. The segment at 202–273 is small ATPAse domain (RuvB-S); that stretch reads GLEDLQAIVE…LVDEALTLHR (72 aa). The tract at residues 276–352 is head domain (RuvB-H); it reads ARGLDASDRR…RRHLGWPELP (77 aa). DNA is bound by residues Arg331 and Arg336.

It belongs to the RuvB family. In terms of assembly, homohexamer. Forms an RuvA(8)-RuvB(12)-Holliday junction (HJ) complex. HJ DNA is sandwiched between 2 RuvA tetramers; dsDNA enters through RuvA and exits via RuvB. An RuvB hexamer assembles on each DNA strand where it exits the tetramer. Each RuvB hexamer is contacted by two RuvA subunits (via domain III) on 2 adjacent RuvB subunits; this complex drives branch migration. In the full resolvosome a probable DNA-RuvA(4)-RuvB(12)-RuvC(2) complex forms which resolves the HJ.

Its subcellular location is the cytoplasm. The enzyme catalyses ATP + H2O = ADP + phosphate + H(+). Functionally, the RuvA-RuvB-RuvC complex processes Holliday junction (HJ) DNA during genetic recombination and DNA repair, while the RuvA-RuvB complex plays an important role in the rescue of blocked DNA replication forks via replication fork reversal (RFR). RuvA specifically binds to HJ cruciform DNA, conferring on it an open structure. The RuvB hexamer acts as an ATP-dependent pump, pulling dsDNA into and through the RuvAB complex. RuvB forms 2 homohexamers on either side of HJ DNA bound by 1 or 2 RuvA tetramers; 4 subunits per hexamer contact DNA at a time. Coordinated motions by a converter formed by DNA-disengaged RuvB subunits stimulates ATP hydrolysis and nucleotide exchange. Immobilization of the converter enables RuvB to convert the ATP-contained energy into a lever motion, pulling 2 nucleotides of DNA out of the RuvA tetramer per ATP hydrolyzed, thus driving DNA branch migration. The RuvB motors rotate together with the DNA substrate, which together with the progressing nucleotide cycle form the mechanistic basis for DNA recombination by continuous HJ branch migration. Branch migration allows RuvC to scan DNA until it finds its consensus sequence, where it cleaves and resolves cruciform DNA. The sequence is that of Holliday junction branch migration complex subunit RuvB from Prochlorococcus marinus (strain MIT 9313).